The chain runs to 501 residues: Aluminum-activated malate transporter 2 (501 aa).

6 consecutive transmembrane segments (helical) span residues 22–42 (VVHAFKVGLALALVSSFYYYQ), 52–72 (AMWAVMTVVVVFEFSVGATLG), 78–98 (AVATLVAGGLGIGAHHLASLS), 101–121 (TVEPILLAIFVFVLAALSTFV), 130–150 (RYDYGVLIFILTFALISVSGF), and 166–186 (VIMGGVSCVLISIFVCPVWAG). Residues 398 to 425 (FKNKKKPSKSNSGSIGQAMPNKSHDDDD) are disordered.

Belongs to the aromatic acid exporter (TC 2.A.85) family.

It localises to the membrane. Functionally, malate transporter. The polypeptide is Aluminum-activated malate transporter 2 (ALMT2) (Arabidopsis thaliana (Mouse-ear cress)).